The following is a 1877-amino-acid chain: Phosphatidylinositol 4-kinase stt4 (1877 aa).

The PIK helical domain occupies 1305-1491 (PDSDAASSPI…KPILDRVMDK (187 aa)). Residues 1492 to 1625 (MINSLSGEDK…EVWQSAIFKV (134 aa)) are pleckstrin homology (PH) domain conferring phosphoinositide binding specificity. The region spanning 1593 to 1861 (DPEELAVNGT…LIEQSYANKR (269 aa)) is the PI3K/PI4K catalytic domain. Residues 1599–1605 (VNGTEEE) form a G-loop region. Residues 1728 to 1736 (QFKDRHNGN) form a catalytic loop region. The segment at 1747-1771 (HIDFGFIFDIAPGGITFESAPFKLT) is activation loop.

This sequence belongs to the PI3/PI4-kinase family. Type III PI4K subfamily.

The protein localises to the cytoplasm. The enzyme catalyses a 1,2-diacyl-sn-glycero-3-phospho-(1D-myo-inositol) + ATP = a 1,2-diacyl-sn-glycero-3-phospho-(1D-myo-inositol 4-phosphate) + ADP + H(+). Its function is as follows. Acts on phosphatidylinositol (PI) in the first committed step in the production of the second messenger inositol 1,4,5,-trisphosphate. In Schizosaccharomyces pombe (strain 972 / ATCC 24843) (Fission yeast), this protein is Phosphatidylinositol 4-kinase stt4 (stt4).